A 328-amino-acid polypeptide reads, in one-letter code: Cytochrome c biogenesis protein CcsA (328 aa).

The next 8 helical transmembrane spans lie at 13 to 33 (ISFS…LVNL), 46 to 66 (GIII…IYSG), 73 to 93 (LYES…VSYF), 101 to 121 (LNAI…SGLL), 146 to 166 (MILG…LLVI), 234 to 254 (IISL…VWAN), 263 to 283 (WDPK…YLHI), and 295 to 315 (AIVA…VNLL).

This sequence belongs to the CcmF/CycK/Ccl1/NrfE/CcsA family. In terms of assembly, may interact with Ccs1.

The protein resides in the plastid. It localises to the chloroplast thylakoid membrane. Required during biogenesis of c-type cytochromes (cytochrome c6 and cytochrome f) at the step of heme attachment. This is Cytochrome c biogenesis protein CcsA from Capsella bursa-pastoris (Shepherd's purse).